The sequence spans 314 residues: Prohormone-3 (314 aa).

The first 19 residues, 1–19 (MGRVLLSASSLLLHIQVFT), serve as a signal peptide directing secretion. A helical transmembrane segment spans residues 90 to 112 (YTCVALTVVALVSTMHFGVEAWG).

The protein resides in the membrane. The sequence is that of Prohormone-3 from Apis mellifera (Honeybee).